Consider the following 355-residue polypeptide: DNA polymerase IV (355 aa).

The UmuC domain maps to 7 to 188 (IIHIDMDCFY…LPVRKLFGVG (182 aa)). Aspartate 11 and aspartate 106 together coordinate Mg(2+). Glutamate 107 is an active-site residue.

Belongs to the DNA polymerase type-Y family. In terms of assembly, monomer. Mg(2+) is required as a cofactor.

The protein resides in the cytoplasm. The catalysed reaction is DNA(n) + a 2'-deoxyribonucleoside 5'-triphosphate = DNA(n+1) + diphosphate. Poorly processive, error-prone DNA polymerase involved in untargeted mutagenesis. Copies undamaged DNA at stalled replication forks, which arise in vivo from mismatched or misaligned primer ends. These misaligned primers can be extended by PolIV. Exhibits no 3'-5' exonuclease (proofreading) activity. May be involved in translesional synthesis, in conjunction with the beta clamp from PolIII. The chain is DNA polymerase IV from Legionella pneumophila (strain Paris).